A 535-amino-acid polypeptide reads, in one-letter code: Calcium-dependent protein kinase 7 (535 aa).

The interval methionine 1–serine 29 is disordered. Glycine 2 is lipidated: N-myristoyl glycine. One can recognise a Protein kinase domain in the interval tyrosine 59–isoleucine 317. ATP contacts are provided by residues valine 65–threonine 73 and lysine 88. Aspartate 183 functions as the Proton acceptor in the catalytic mechanism. Position 223 is a phosphoserine (serine 223). An autoinhibitory domain region spans residues alanine 323–isoleucine 353. 4 EF-hand domains span residues glutamate 360–glutamine 395, isoleucine 396–methionine 431, alanine 432–asparagine 467, and threonine 468–tryptophan 504. Residues aspartate 373, asparagine 375, lysine 379, glutamate 384, aspartate 409, aspartate 411, aspartate 413, threonine 415, glutamate 420, aspartate 445, asparagine 447, serine 449, tyrosine 451, glutamate 456, aspartate 482, aspartate 484, aspartate 486, and arginine 488 each coordinate Ca(2+). The residue at position 490 (serine 490) is a Phosphoserine. Glutamate 493 contacts Ca(2+).

Belongs to the protein kinase superfamily. Ser/Thr protein kinase family. CDPK subfamily.

The protein resides in the cell membrane. The catalysed reaction is L-seryl-[protein] + ATP = O-phospho-L-seryl-[protein] + ADP + H(+). It catalyses the reaction L-threonyl-[protein] + ATP = O-phospho-L-threonyl-[protein] + ADP + H(+). With respect to regulation, activated by calcium. Autophosphorylation may play an important role in the regulation of the kinase activity. Its function is as follows. May play a role in signal transduction pathways that involve calcium as a second messenger. The polypeptide is Calcium-dependent protein kinase 7 (CPK7) (Arabidopsis thaliana (Mouse-ear cress)).